The primary structure comprises 302 residues: Phosphoribosylaminoimidazole-succinocarboxamide synthase (302 aa).

The protein belongs to the SAICAR synthetase family.

The catalysed reaction is 5-amino-1-(5-phospho-D-ribosyl)imidazole-4-carboxylate + L-aspartate + ATP = (2S)-2-[5-amino-1-(5-phospho-beta-D-ribosyl)imidazole-4-carboxamido]succinate + ADP + phosphate + 2 H(+). It participates in purine metabolism; IMP biosynthesis via de novo pathway; 5-amino-1-(5-phospho-D-ribosyl)imidazole-4-carboxamide from 5-amino-1-(5-phospho-D-ribosyl)imidazole-4-carboxylate: step 1/2. The polypeptide is Phosphoribosylaminoimidazole-succinocarboxamide synthase (Leptothrix cholodnii (strain ATCC 51168 / LMG 8142 / SP-6) (Leptothrix discophora (strain SP-6))).